Reading from the N-terminus, the 363-residue chain is Aminomethyltransferase (363 aa).

Belongs to the GcvT family. In terms of assembly, the glycine cleavage system is composed of four proteins: P, T, L and H.

The enzyme catalyses N(6)-[(R)-S(8)-aminomethyldihydrolipoyl]-L-lysyl-[protein] + (6S)-5,6,7,8-tetrahydrofolate = N(6)-[(R)-dihydrolipoyl]-L-lysyl-[protein] + (6R)-5,10-methylene-5,6,7,8-tetrahydrofolate + NH4(+). Functionally, the glycine cleavage system catalyzes the degradation of glycine. The protein is Aminomethyltransferase of Staphylococcus epidermidis (strain ATCC 35984 / DSM 28319 / BCRC 17069 / CCUG 31568 / BM 3577 / RP62A).